The sequence spans 590 residues: FAD-linked oxidoreductase malF (590 aa).

Residues 1 to 18 (MKYTATFALLILAIGIQT) form the signal peptide. Residues N44, N80, N103, N178, and N396 are each glycosylated (N-linked (GlcNAc...) asparagine). The 187-residue stretch at 117 to 303 (AQGRIPLYSA…TSVTLRAFAD (187 aa)) folds into the FAD-binding PCMH-type domain.

This sequence belongs to the oxygen-dependent FAD-linked oxidoreductase family. FAD is required as a cofactor.

In terms of biological role, FAD-linked oxidoreductase; part of the gene cluster that mediates the biosynthesis of malbrancheamide, a dichlorinated fungal indole alkaloid that belongs to a family of natural products containing a characteristic bicyclo[2.2.2]diazaoctane core. The first step of malbrancheamide biosynthesis involves coupling of L-proline and L-tryptophan by malG, a bimodular NRPS, to produce L-Pro-L-Trp aldehyde through reductive offloading. This compound undergoes spontaneous cyclization and dehydration to give a dienamine which is reverse prenylated at C-2 by malE. The other prenyltransferase present in the cluster, malB, displays modest activity, suggesting that may be a redundant gene in the pathway. Subsequently, a [4+2] Diels-Alder cyclo-addition catalyzed by the bifunctional enzyme malC forms the characteristic bicyclo[2.2.2]diazaoctane ring of premalbrancheamid. Finally, the flavin-dependent halogenase malA catalyzes the iterative dichlorination of the indole ring of premalbrancheamide to yield C-9 monochlorinated malbrancheamide B, C-8 monochlorinated isomalbrancheamide B, and dichlorinated malbrancheamide. MalA is also able to brominate premalbrancheamide at C-9 to yield malbrancheamide C, and, to a lesser extend, at C-8 to yield isomalbrancheamide C. Finally, malA can brominate C-9 monochlorinated malbrancheamide B at C-8 to yield malbrancheamide D, or C-8 monochlorinated isomalbrancheamide B at C-9 to produce isomalbrancheamide D. In Malbranchea aurantiaca, this protein is FAD-linked oxidoreductase malF.